A 203-amino-acid chain; its full sequence is Dephospho-CoA kinase (203 aa).

The DPCK domain maps to 5 to 203; the sequence is IVGLTGGIAS…VVYRVAASEH (199 aa). 13–18 serves as a coordination point for ATP; sequence ASGKSA.

Belongs to the CoaE family.

Its subcellular location is the cytoplasm. It carries out the reaction 3'-dephospho-CoA + ATP = ADP + CoA + H(+). It functions in the pathway cofactor biosynthesis; coenzyme A biosynthesis; CoA from (R)-pantothenate: step 5/5. Its function is as follows. Catalyzes the phosphorylation of the 3'-hydroxyl group of dephosphocoenzyme A to form coenzyme A. The sequence is that of Dephospho-CoA kinase from Xanthomonas euvesicatoria pv. vesicatoria (strain 85-10) (Xanthomonas campestris pv. vesicatoria).